The primary structure comprises 108 residues: Phosphoribosyl-AMP cyclohydrolase (108 aa).

D78 is a binding site for Mg(2+). Zn(2+) is bound at residue C79. D80 and D82 together coordinate Mg(2+). Zn(2+) contacts are provided by C95 and C102.

The protein belongs to the PRA-CH family. As to quaternary structure, homodimer. Mg(2+) serves as cofactor. It depends on Zn(2+) as a cofactor.

The protein localises to the cytoplasm. It carries out the reaction 1-(5-phospho-beta-D-ribosyl)-5'-AMP + H2O = 1-(5-phospho-beta-D-ribosyl)-5-[(5-phospho-beta-D-ribosylamino)methylideneamino]imidazole-4-carboxamide. Its pathway is amino-acid biosynthesis; L-histidine biosynthesis; L-histidine from 5-phospho-alpha-D-ribose 1-diphosphate: step 3/9. Catalyzes the hydrolysis of the adenine ring of phosphoribosyl-AMP. This Nitrosopumilus maritimus (strain SCM1) protein is Phosphoribosyl-AMP cyclohydrolase.